Consider the following 169-residue polypeptide: METAEGPHLVRLYVYDMSRGLARRLSPVMLGKQLEGIWHTSIIVFDEEFFYGREGITSCLPGRTMLGEPDSVMELGITEVTEEIFLEYLSSLGESGFSGESYHLFDHNCNTFSNEVAQFLTGKKIPSYITELPSEVLSTPLGQALRPLLDSVQIQPAGGNIFNRQSGPS.

The 143-residue stretch at 8 to 150 (HLVRLYVYDM…LGQALRPLLD (143 aa)) folds into the PPPDE domain. His-39 is a catalytic residue. Residues 84–92 (IFLEYLSSL) carry the Nuclear export signal 1 motif. Cys-109 is a catalytic residue. The Nuclear export signal 2 motif lies at 140-154 (PLGQALRPLLDSVQI).

Belongs to the DeSI family. In terms of assembly, homodimer.

The protein resides in the cytoplasm. The protein localises to the nucleus. It catalyses the reaction S-hexadecanoyl-L-cysteinyl-[protein] + H2O = L-cysteinyl-[protein] + hexadecanoate + H(+). Protease which deconjugates SUMO1, SUMO2 and SUMO3 from some substrate proteins. Has isopeptidase but not SUMO-processing activity. Collaborates with ubqln4 in the export of ubiquitinated proteins from the nucleus to the cytoplasm. Exhibits palmitoyl protein thioesterase (S-depalmitoylation) activity towards synthetic substrates 4-methylumbelliferyl-6-S-palmitoyl-beta-D-glucopyranoside and S-depalmitoylation probe 5 (DPP-5). In Xenopus laevis (African clawed frog), this protein is Desumoylating isopeptidase 1.